The sequence spans 291 residues: ATP synthase gamma chain (291 aa).

Belongs to the ATPase gamma chain family. F-type ATPases have 2 components, CF(1) - the catalytic core - and CF(0) - the membrane proton channel. CF(1) has five subunits: alpha(3), beta(3), gamma(1), delta(1), epsilon(1). CF(0) has three main subunits: a, b and c.

The protein resides in the cell inner membrane. In terms of biological role, produces ATP from ADP in the presence of a proton gradient across the membrane. The gamma chain is believed to be important in regulating ATPase activity and the flow of protons through the CF(0) complex. This Chlorobium limicola (strain DSM 245 / NBRC 103803 / 6330) protein is ATP synthase gamma chain.